We begin with the raw amino-acid sequence, 488 residues long: Cis-aconitate decarboxylase (488 aa).

Belongs to the PrpD family. As to quaternary structure, homodimer. Expressed in LPS-tolerized macrophages (at protein level). Expressed in the luminal epithelial cells of pregnant uterus. Expressed in microglia and macrophage cells.

It localises to the mitochondrion. The catalysed reaction is cis-aconitate + H(+) = itaconate + CO2. Functionally, cis-aconitate decarboxylase that catalyzes production of itaconate and is involved in the inhibition of the inflammatory response. Acts as a negative regulator of the Toll-like receptors (TLRs)-mediated inflammatory innate response by stimulating the tumor necrosis factor alpha-induced protein TNFAIP3 expression via reactive oxygen species (ROS) in LPS-tolerized macrophages. Involved in antimicrobial response of innate immune cells; ACOD1-mediated itaconic acid production contributes to the antimicrobial activity of macrophages by generating itaconate, leading to alkylation of proteins, such as TFEB. Involved in antiviral response following infection by flavivirus in neurons: ACOD1-mediated itaconate production inhibits the activity of succinate dehydrogenase, generating a metabolic state in neurons that suppresses replication of viral genomes. Plays a role in the embryo implantation. This chain is Cis-aconitate decarboxylase, found in Mus musculus (Mouse).